The sequence spans 306 residues: Diacylglycerol kinase (306 aa).

The DAGKc domain occupies 1–132 (MRKRARIIYN…VDIGKMNSRY (132 aa)). ATP contacts are provided by residues 10–14 (NPTSG), T41, 67–73 (GDGTLNE), and T94. Mg(2+)-binding residues include R213, D216, and Y218. The active-site Proton acceptor is the E273.

Belongs to the diacylglycerol/lipid kinase family. As to quaternary structure, homodimer. Mg(2+) serves as cofactor.

It carries out the reaction a 1,2-diacyl-sn-glycerol + ATP = a 1,2-diacyl-sn-glycero-3-phosphate + ADP + H(+). Functionally, catalyzes the phosphorylation of diacylglycerol (DAG) into phosphatidic acid. Is a key enzyme involved in the production of lipoteichoic acid by reintroducing DAG formed from the breakdown of membrane phospholipids into the phosphatidylglycerol biosynthetic pathway. The polypeptide is Diacylglycerol kinase (dagK) (Staphylococcus carnosus (strain TM300)).